The following is a 376-amino-acid chain: Glutamate 5-kinase (376 aa).

Lys-15 contacts ATP. Substrate contacts are provided by Ser-56, Asp-143, and Asn-155. Ser-175–Asp-176 is an ATP binding site. The 78-residue stretch at Lys-281–Thr-358 folds into the PUA domain.

The protein belongs to the glutamate 5-kinase family.

The protein localises to the cytoplasm. The catalysed reaction is L-glutamate + ATP = L-glutamyl 5-phosphate + ADP. It participates in amino-acid biosynthesis; L-proline biosynthesis; L-glutamate 5-semialdehyde from L-glutamate: step 1/2. Its function is as follows. Catalyzes the transfer of a phosphate group to glutamate to form L-glutamate 5-phosphate. The polypeptide is Glutamate 5-kinase (Rhodopseudomonas palustris (strain BisB18)).